Consider the following 42-residue polypeptide: Beta-defensin 13 (42 aa).

Disulfide bonds link cysteine 9–cysteine 38, cysteine 16–cysteine 31, and cysteine 21–cysteine 39.

The protein belongs to the beta-defensin family. As to expression, neutrophilic granules.

Its subcellular location is the secreted. Functionally, has bactericidal activity. Active against E.coli ML35 and S.aureus 502A. This is Beta-defensin 13 (DEFB13) from Bos taurus (Bovine).